The sequence spans 345 residues: MMFPGLLAPPAGYPSLLRPTPTLTLPQSLQSAFSGHSSFLVEDLIRISRPPAYLPRGSVPTPSMSPPRPGAPAALTDTGASDLGSPGPGSRRGGSPQTAVSPASEPTFLKFGVNAILSSAPRTETSPTLLQSVPPKTFAFPYFEGSFQPFIRSSYFPASSSVVPIPGTFSWPLAARGKPRRGMLRRAVFSDVQRKALEKMFQKQKYISKPDRKKLAAKLGLKDSQVKIWFQNRRMKWRNSKERELLSSGGCREQTLPTKLNPHPDLSDVGQKGPGDDDDEEDEGPGSPRPRLVYHAAPADPRHLRDPRLEAPLPTSPARSGSPDKASDFSDSEDDEEGEEEITVS.

2 disordered regions span residues 55-103 (PRGS…VSPA) and 241-345 (KERE…ITVS). Residues 182–241 (GMLRRAVFSDVQRKALEKMFQKQKYISKPDRKKLAAKLGLKDSQVKIWFQNRRMKWRNSK) constitute a DNA-binding region (homeobox). Basic and acidic residues predominate over residues 300-309 (DPRHLRDPRL). The span at 330–345 (SDSEDDEEGEEEITVS) shows a compositional bias: acidic residues.

The protein belongs to the H2.0 homeobox family.

The protein localises to the nucleus. In terms of biological role, could have a role in patterning the central nervous system during embryogenesis. Has a key role in regulating the distinct phenotypic features that distinguish two major classes of ventral interneurons, V0 and V1 neurons. Regulates the transcription factor profile, neurotransmitter phenotype, intraspinal migratory path and axonal trajectory of V0 neurons, features that differentiate them from an adjacent set of V1 neurons. The chain is Homeobox protein DBX1 (DBX1) from Bos taurus (Bovine).